Here is a 375-residue protein sequence, read N- to C-terminus: Cytochrome P450 monooxygenase ACRTS1 (375 aa).

Cys321 contributes to the heme binding site.

The protein belongs to the cytochrome P450 family. Heme is required as a cofactor.

It participates in mycotoxin biosynthesis. Cytochrome P450 monooxygenase; part of the gene cluster that mediates the biosynthesis of the host-selective toxins (HSTs) ACR-toxins responsible for brown spot of rough lemon disease by the rough lemon pathotype. ACR-toxins cause uncoupling of mitochondrial oxidative-phosphorylation similar to that of classic protonophore. The structure of the major form of ACR-toxin (ACR-toxin I) consists of an alpha-dihydropyrone ring in a 19-carbon polyalcohol, a typical polyketide structure. Minor toxins were characterized as having a pyrone ring with polyalcohol side chains different in length and showing weaker toxicity. The highly reducing polyketide synthase ACRTS2 has all necessary enzymatic domains for multiple cycles of condensation and beta-keto processing. The cytochrome P450 monooxygenase ACRTS1 has also been shown to be essential for ACR-toxin biosynthesis, however its exact role in the pathway has not been elucidated yet. The polypeptide is Cytochrome P450 monooxygenase ACRTS1 (Alternaria alternata (Alternaria rot fungus)).